A 202-amino-acid polypeptide reads, in one-letter code: Transmembrane 4 L6 family member 4 (202 aa).

Residues 1–9 (MCTGGCARC) lie on the Cytoplasmic side of the membrane. A helical membrane pass occupies residues 10 to 30 (LGGTLIPLAVFGLLANILLFF). Topologically, residues 31–48 (PGGKVVNDKSHLSDEVWY) are extracellular. Residues 49-69 (FGGILGSGVLMIFPALVFLGL) traverse the membrane as a helical segment. Residues 70-93 (QNNDCCGCCGNEGCGKRFAMFTST) are Cytoplasmic-facing. Residues 94-114 (LFAVIGFLGAGYSFIVSAVSI) form a helical membrane-spanning segment. Residues 115 to 158 (NKGPKCFMANGTWGYPFHDGDYLKDQALWSECEEPRDVVPWNLT) lie on the Extracellular side of the membrane. Residue Asn-156 is glycosylated (N-linked (GlcNAc...) asparagine). A helical membrane pass occupies residues 159–179 (LFSILLVIGGIQMVLCAIQVI). Residues 180 to 202 (NGLLGTLCGDCQCCGCCGGDGPV) lie on the Cytoplasmic side of the membrane.

Belongs to the L6 tetraspanin family.

Its subcellular location is the membrane. In terms of biological role, regulates the adhesive and proliferative status of intestinal epithelial cells. Can mediate density-dependent cell proliferation. The chain is Transmembrane 4 L6 family member 4 (Tm4sf4) from Mus musculus (Mouse).